Here is a 197-residue protein sequence, read N- to C-terminus: Large ribosomal subunit protein bL25 (197 aa).

The protein belongs to the bacterial ribosomal protein bL25 family. CTC subfamily. In terms of assembly, part of the 50S ribosomal subunit; part of the 5S rRNA/L5/L18/L25 subcomplex. Contacts the 5S rRNA. Binds to the 5S rRNA independently of L5 and L18.

Functionally, this is one of the proteins that binds to the 5S RNA in the ribosome where it forms part of the central protuberance. The protein is Large ribosomal subunit protein bL25 of Pseudomonas putida (strain GB-1).